We begin with the raw amino-acid sequence, 72 residues long: Large ribosomal subunit protein bL28 (72 aa).

This sequence belongs to the bacterial ribosomal protein bL28 family.

The chain is Large ribosomal subunit protein bL28 from Chlorobium phaeobacteroides (strain BS1).